We begin with the raw amino-acid sequence, 89 residues long: UPF0147 protein STK_04605 (89 aa).

This sequence belongs to the UPF0147 family.

This is UPF0147 protein STK_04605 from Sulfurisphaera tokodaii (strain DSM 16993 / JCM 10545 / NBRC 100140 / 7) (Sulfolobus tokodaii).